The following is a 432-amino-acid chain: Glutamyl-tRNA reductase (432 aa).

Residues 49-52 (TCNR), S101, 106-108 (EPQ), and Q112 contribute to the substrate site. Residue C50 is the Nucleophile of the active site. 181–186 (GAGETI) provides a ligand contact to NADP(+). The disordered stretch occupies residues 407–432 (FPEKPGYQHPPIATPIVRTDDADPAP).

This sequence belongs to the glutamyl-tRNA reductase family. In terms of assembly, homodimer.

The enzyme catalyses (S)-4-amino-5-oxopentanoate + tRNA(Glu) + NADP(+) = L-glutamyl-tRNA(Glu) + NADPH + H(+). Its pathway is porphyrin-containing compound metabolism; protoporphyrin-IX biosynthesis; 5-aminolevulinate from L-glutamyl-tRNA(Glu): step 1/2. Its function is as follows. Catalyzes the NADPH-dependent reduction of glutamyl-tRNA(Glu) to glutamate 1-semialdehyde (GSA). This is Glutamyl-tRNA reductase from Xanthomonas oryzae pv. oryzae (strain MAFF 311018).